The chain runs to 245 residues: Thiopurine S-methyltransferase (245 aa).

29–40 (WQDKWVSHKIGF) provides a ligand contact to S-adenosyl-L-methionine. Phe40 is a binding site for substrate. Lys58 carries the post-translational modification N6-acetyllysine. S-adenosyl-L-methionine-binding positions include Leu69, Glu90, 134-135 (SI), and Arg152.

It belongs to the class I-like SAM-binding methyltransferase superfamily. TPMT family. Monomer.

The protein resides in the cytoplasm. It carries out the reaction S-adenosyl-L-methionine + a thiopurine = S-adenosyl-L-homocysteine + a thiopurine S-methylether.. This chain is Thiopurine S-methyltransferase (TPMT), found in Oryctolagus cuniculus (Rabbit).